The primary structure comprises 173 residues: NADH-quinone oxidoreductase subunit I 2 (173 aa).

2 consecutive 4Fe-4S ferredoxin-type domains span residues 41–73 (IVLT…LAKA) and 83–112 (EYFR…LTPD). [4Fe-4S] cluster is bound by residues C53, C56, C59, C63, C92, C95, C98, and C102. Residues 153–163 (GKDKGEAEHEA) show a composition bias toward basic and acidic residues. Positions 153–173 (GKDKGEAEHEAPPVNLKGLLP) are disordered.

This sequence belongs to the complex I 23 kDa subunit family. As to quaternary structure, NDH-1 is composed of 14 different subunits. Subunits NuoA, H, J, K, L, M, N constitute the membrane sector of the complex. Requires [4Fe-4S] cluster as cofactor.

The protein resides in the cell inner membrane. The catalysed reaction is a quinone + NADH + 5 H(+)(in) = a quinol + NAD(+) + 4 H(+)(out). Functionally, NDH-1 shuttles electrons from NADH, via FMN and iron-sulfur (Fe-S) centers, to quinones in the respiratory chain. The immediate electron acceptor for the enzyme in this species is believed to be ubiquinone. Couples the redox reaction to proton translocation (for every two electrons transferred, four hydrogen ions are translocated across the cytoplasmic membrane), and thus conserves the redox energy in a proton gradient. The protein is NADH-quinone oxidoreductase subunit I 2 of Rhodopseudomonas palustris (strain ATCC BAA-98 / CGA009).